The chain runs to 392 residues: MDLFGDLPEPERSPRPAAGKEAQKGPLLFDDLPPASSTDSGSGGPLLFDDLPPASSGDSGSLATSISQMVKTEGKGAKRKTSEEEKNGSEELVEKKVCKASSVIFGLKGYVAERKGEREEMQDAHVILNDITEECRPPSSLITRVSYFAVFDGHGGIRASKFAAQNLHQNLIRKFPKGDVISVEKTVKRCLLDTFKHTDEEFLKQASSQKPAWKDGSTATCVLAVDNILYIANLGDSRAILCRYNEESQKHAALSLSKEHNPTQYEERMRIQKAGGNVRDGRVLGVLEVSRSIGDGQYKRCGVTSVPDIRRCQLTPNDRFILLACDGLFKVFTPEEAVNFILSCLEDEKIQTREGKSAADARYEAACNRLANKAVQRGSADNVTVMVVRIGH.

The residue at position 1 (Met-1) is an N-acetylmethionine. Residues 1 to 90 (MDLFGDLPEP…TSEEEKNGSE (90 aa)) are disordered. Ser-13 carries the post-translational modification Phosphoserine. The segment covering 56–70 (SGDSGSLATSISQMV) has biased composition (polar residues). A compositionally biased stretch (basic and acidic residues) spans 72 to 90 (TEGKGAKRKTSEEEKNGSE). The PPM-type phosphatase domain maps to 108–390 (KGYVAERKGE…DNVTVMVVRI (283 aa)). Residues Asp-152 and Gly-153 each contribute to the Mn(2+) site. At Lys-210 the chain carries N6-acetyllysine. Residues Asp-326 and Asp-381 each contribute to the Mn(2+) site.

Belongs to the PP2C family. Interacts with ILK. Specific association with ILK is independent of the catalytic activity of either partner. It depends on Mg(2+) as a cofactor. Requires Mn(2+) as cofactor. As to expression, widely expressed. Highest levels expressed in striated muscle. Much lower levels evident in various smooth muscle tissues.

It is found in the cytoplasm. The catalysed reaction is O-phospho-L-seryl-[protein] + H2O = L-seryl-[protein] + phosphate. It catalyses the reaction O-phospho-L-threonyl-[protein] + H2O = L-threonyl-[protein] + phosphate. With respect to regulation, inhibited rather than stimulated by magnesium. Protein phosphatase that may play a role in regulation of cell cycle progression via dephosphorylation of its substrates whose appropriate phosphorylation states might be crucial for cell proliferation. Selectively associates with integrin linked kinase (ILK), to modulate cell adhesion and growth factor signaling. Inhibits the ILK-GSK3B signaling axis and may play an important role in inhibiting oncogenic transformation. The polypeptide is Integrin-linked kinase-associated serine/threonine phosphatase 2C (ILKAP) (Homo sapiens (Human)).